The sequence spans 247 residues: Cell division protein ZapD (247 aa).

This sequence belongs to the ZapD family. In terms of assembly, interacts with FtsZ.

Its subcellular location is the cytoplasm. Functionally, cell division factor that enhances FtsZ-ring assembly. Directly interacts with FtsZ and promotes bundling of FtsZ protofilaments, with a reduction in FtsZ GTPase activity. This Citrobacter koseri (strain ATCC BAA-895 / CDC 4225-83 / SGSC4696) protein is Cell division protein ZapD.